A 158-amino-acid chain; its full sequence is SKP1-like protein 18 (158 aa).

Residues 99-157 form an interaction with the F-box domain of F-box proteins region; sequence ILAANYLNFEGLLGFASQTVADYIKDKTPEEVREIFNIENDFTPEEEEEIRKENAWTFN.

Belongs to the SKP1 family. Part of a SCF (SKP1-cullin-F-box) protein ligase complex. Interacts with CPR1/CPR30, EBF1, SKP2A, At3g61590, At4g38940 and At5g49610. As to expression, expressed in young seedlings, roots, leaves, floral stems, inflorescences, pollen, and siliques.

It is found in the nucleus. The protein operates within protein modification; protein ubiquitination. Involved in ubiquitination and subsequent proteasomal degradation of target proteins. Together with CUL1, RBX1 and a F-box protein, it forms a SCF E3 ubiquitin ligase complex. The functional specificity of this complex depends on the type of F-box protein. In the SCF complex, it serves as an adapter that links the F-box protein to CUL1. In Arabidopsis thaliana (Mouse-ear cress), this protein is SKP1-like protein 18 (ASK18).